A 192-amino-acid polypeptide reads, in one-letter code: Protein GrpE (192 aa).

The span at 1 to 20 (MEERNEQVVEEVKEEVKEAQ) shows a compositional bias: basic and acidic residues. Residues 1–34 (MEERNEQVVEEVKEEVKEAQVEEAVTSEDSEETV) are disordered. Residues 25 to 34 (VTSEDSEETV) are compositionally biased toward acidic residues.

Belongs to the GrpE family. As to quaternary structure, homodimer.

It is found in the cytoplasm. Functionally, participates actively in the response to hyperosmotic and heat shock by preventing the aggregation of stress-denatured proteins, in association with DnaK and GrpE. It is the nucleotide exchange factor for DnaK and may function as a thermosensor. Unfolded proteins bind initially to DnaJ; upon interaction with the DnaJ-bound protein, DnaK hydrolyzes its bound ATP, resulting in the formation of a stable complex. GrpE releases ADP from DnaK; ATP binding to DnaK triggers the release of the substrate protein, thus completing the reaction cycle. Several rounds of ATP-dependent interactions between DnaJ, DnaK and GrpE are required for fully efficient folding. The sequence is that of Protein GrpE from Bacillus cereus (strain AH187).